The primary structure comprises 553 residues: Hydroxylamine reductase (553 aa).

Residues Cys-3, Cys-6, Cys-18, and Cys-25 each contribute to the [2Fe-2S] cluster site. Hybrid [4Fe-2O-2S] cluster-binding residues include His-249, Glu-273, Cys-317, Cys-405, Cys-433, Cys-459, Glu-493, and Lys-495. Cys-405 is modified (cysteine persulfide).

This sequence belongs to the HCP family. [2Fe-2S] cluster is required as a cofactor. The cofactor is hybrid [4Fe-2O-2S] cluster.

The protein localises to the cytoplasm. The enzyme catalyses A + NH4(+) + H2O = hydroxylamine + AH2 + H(+). Its function is as follows. Catalyzes the reduction of hydroxylamine to form NH(3) and H(2)O. The sequence is that of Hydroxylamine reductase from Actinobacillus succinogenes (strain ATCC 55618 / DSM 22257 / CCUG 43843 / 130Z).